Here is a 154-residue protein sequence, read N- to C-terminus: uncharacterized protein (154 aa).

2 coiled-coil regions span residues 8 to 48 (DEEV…AIEA) and 89 to 138 (VQEL…RGLV).

This is an uncharacterized protein from Treponema pallidum (strain Nichols).